The following is an 82-amino-acid chain: Small ribosomal subunit protein bS18 (82 aa).

Positions 1 to 20 (MVDINQIPTRRPFHRRHKTC) are disordered.

Belongs to the bacterial ribosomal protein bS18 family. Part of the 30S ribosomal subunit. Forms a tight heterodimer with protein bS6.

In terms of biological role, binds as a heterodimer with protein bS6 to the central domain of the 16S rRNA, where it helps stabilize the platform of the 30S subunit. This chain is Small ribosomal subunit protein bS18, found in Brucella suis (strain ATCC 23445 / NCTC 10510).